A 415-amino-acid polypeptide reads, in one-letter code: Camphor 5-monooxygenase (415 aa).

Cys-358 is a binding site for heme.

The protein belongs to the cytochrome P450 family. Heme serves as cofactor.

The protein localises to the cytoplasm. The enzyme catalyses 2 reduced [2Fe-2S]-[putidaredoxin] + (1R,4R)-camphor + O2 + 2 H(+) = (1R,4R,5R)-5-hydroxycamphor + 2 oxidized [2Fe-2S]-[putidaredoxin] + H2O. It functions in the pathway terpene metabolism; (R)-camphor degradation. Its function is as follows. Involved in a camphor oxidation system. This Pseudomonas putida (Arthrobacter siderocapsulatus) protein is Camphor 5-monooxygenase (camC).